Reading from the N-terminus, the 132-residue chain is Large ribosomal subunit protein bL17 (132 aa).

Belongs to the bacterial ribosomal protein bL17 family. In terms of assembly, part of the 50S ribosomal subunit. Contacts protein L32.

The polypeptide is Large ribosomal subunit protein bL17 (Ralstonia pickettii (strain 12J)).